The sequence spans 306 residues: Ribonuclease Z (306 aa).

His63, His65, Asp67, His68, His140, Asp211, and His269 together coordinate Zn(2+). Asp67 acts as the Proton acceptor in catalysis.

This sequence belongs to the RNase Z family. Homodimer. The cofactor is Zn(2+).

The catalysed reaction is Endonucleolytic cleavage of RNA, removing extra 3' nucleotides from tRNA precursor, generating 3' termini of tRNAs. A 3'-hydroxy group is left at the tRNA terminus and a 5'-phosphoryl group is left at the trailer molecule.. Zinc phosphodiesterase, which displays some tRNA 3'-processing endonuclease activity. Probably involved in tRNA maturation, by removing a 3'-trailer from precursor tRNA. This is Ribonuclease Z from Listeria monocytogenes serovar 1/2a (strain ATCC BAA-679 / EGD-e).